Reading from the N-terminus, the 1028-residue chain is Sodium/potassium-transporting ATPase subunit alpha-4 (1028 aa).

The interval 1-36 (MEPGKETAATSEQKPRPTLRASNTNRQPKVKRRKKD) is disordered. Residues 1 to 92 (MEPGKETAAT…NVLTPPPTTP (92 aa)) are Cytoplasmic-facing. Positions 87-89 (PPP) are interaction with phosphoinositide-3 kinase. Residues 93 to 113 (EWIKFCKQLFGGFSLLLWTGS) form a helical membrane-spanning segment. Residues 114–137 (LLCFLAYGIHVSYYQENANKDNLY) lie on the Extracellular side of the membrane. A helical membrane pass occupies residues 138 to 158 (LGIVLSAVVIITGCFSYYQEA). Topologically, residues 159-294 (KSSKIMESFK…MGKTPIATEI (136 aa)) are cytoplasmic. The chain crosses the membrane as a helical span at residues 295–314 (EHFIHIITAVAVFLGVTFFF). Residues 315–326 (LSLILGYTWLDA) are Extracellular-facing. A helical transmembrane segment spans residues 327–344 (VIFLIGIIVANVPEGLLA). Residues 345-777 (TVTVCLTLTA…EEGRLIFDNL (433 aa)) are Cytoplasmic-facing. The 4-aspartylphosphate intermediate role is filled by Asp-382. Asp-722 and Asp-726 together coordinate Mg(2+). A helical membrane pass occupies residues 778–797 (KKSIAYTLTSNIPEITPFLL). At 798-807 (FIVLSIPLPL) the chain is on the extracellular side. The helical transmembrane segment at 808-828 (GTITILCIDLGTDMVPAISLA) threads the bilayer. Topologically, residues 829–848 (YETPESDIMKRLPRNPKTDN) are cytoplasmic. A helical transmembrane segment spans residues 849-871 (LVNDRLIGMAYGQIGMIQALAGF). Over 872–923 (FTYFVILAENGFKPLDLLGIRLYWDDTNLNDLEDTYGQQWTYEQRKVVEFTC) the chain is Extracellular. A helical membrane pass occupies residues 924-943 (QTAFFISIVIVQWADLIICK). The Cytoplasmic segment spans residues 944–956 (TRRNSLFKQGMKN). A Phosphoserine; by PKA modification is found at Ser-948. A helical transmembrane segment spans residues 957–975 (KVLIFGLLEETILAACLSY). Residues 976 to 990 (IPGMDVALRMYPLKI) lie on the Extracellular side of the membrane. The helical transmembrane segment at 991-1011 (NWWFCALPYSVLIFIYDEVRK) threads the bilayer. The Cytoplasmic portion of the chain corresponds to 1012–1028 (LIIRRRPGGWLEKETYY).

The protein belongs to the cation transport ATPase (P-type) (TC 3.A.3) family. Type IIC subfamily. The sodium/potassium-transporting ATPase is composed of a catalytic alpha subunit, an auxiliary non-catalytic beta subunit and an additional regulatory subunit.

The protein localises to the cell membrane. The catalysed reaction is K(+)(out) + Na(+)(in) + ATP + H2O = K(+)(in) + Na(+)(out) + ADP + phosphate + H(+). With respect to regulation, specifically inhibited by an endogenous cardiac glycoside, ouabain. This is the catalytic component of the active enzyme, which catalyzes the hydrolysis of ATP coupled with the exchange of sodium and potassium ions across the plasma membrane. This action creates the electrochemical gradient of sodium and potassium ions, providing the energy for active transport of various nutrients. Plays a role in sperm motility. This is Sodium/potassium-transporting ATPase subunit alpha-4 (Atp1a4) from Rattus norvegicus (Rat).